The following is a 405-amino-acid chain: Glucose-1-phosphate adenylyltransferase (405 aa).

Alpha-D-glucose 1-phosphate contacts are provided by residues Tyr-99, Gly-164, 179 to 180 (EK), and Ser-197.

This sequence belongs to the bacterial/plant glucose-1-phosphate adenylyltransferase family. In terms of assembly, homotetramer.

The catalysed reaction is alpha-D-glucose 1-phosphate + ATP + H(+) = ADP-alpha-D-glucose + diphosphate. The protein operates within glycan biosynthesis; glycogen biosynthesis. Functionally, involved in the biosynthesis of ADP-glucose, a building block required for the elongation reactions to produce glycogen. Catalyzes the reaction between ATP and alpha-D-glucose 1-phosphate (G1P) to produce pyrophosphate and ADP-Glc. The chain is Glucose-1-phosphate adenylyltransferase from Corynebacterium aurimucosum (strain ATCC 700975 / DSM 44827 / CIP 107346 / CN-1) (Corynebacterium nigricans).